The chain runs to 3176 residues: Large tegument protein deneddylase (3176 aa).

Residues 1 to 12 (MSNGDWGQSQRP) are compositionally biased toward polar residues. The segment at 1-28 (MSNGDWGQSQRPRGTGPMRGIRTMDVNA) is disordered. The segment at 1–268 (MSNGDWGQSQ…YEANGSGFDL (268 aa)) is deubiquitination activity. A Peptidase C76 domain is found at 41-258 (LGTASCNQAH…MLEHYGVYDF (218 aa)). Active-site residues include Cys61, Asp193, and His195. A disordered region spans residues 319-342 (PAARYSPAKTNSPPPSPASAAPAS). 5 tandem repeats follow at residues 335 to 339 (PASAA), 340 to 344 (PASAA), 345 to 349 (PASAA), 350 to 354 (PASAA), and 355 to 359 (PASAA). The tract at residues 335 to 384 (PASAAPASAAPASAAPASAAPASAAQASVAPASVAPASAAPASAAPDSAA) is 10 X 5 AA approximate repeats of P-A-S-A-A. A 6; approximate repeat occupies 360 to 364 (QASVA). One copy of the 7; approximate repeat lies at 365 to 369 (PASVA). A run of 2 repeats spans residues 370–374 (PASAA) and 375–379 (PASAA). Low complexity predominate over residues 376–386 (ASAAPDSAAPA). Disordered regions lie at residues 376–683 (ASAA…GSGL), 928–950 (LLSG…SIYR), 1170–1193 (APIS…TPPL), 1435–1461 (LMET…RARE), 2610–3008 (GLVS…PGAR), and 3023–3043 (TYTV…KMPK). A 10; approximate repeat occupies 380–384 (PDSAA). The span at 457–488 (PRPPVPPHRPPSAARLPPPVIPIPHQSPPASP) shows a compositional bias: pro residues. Low complexity predominate over residues 519-546 (AAPSNPEIPLTTPSPSPTAAAAPTATTL). Positions 579 to 636 (APSPLLPQQQPPPSAAPAPSPLLPQQQPPPSAARAPSPLPPQQQPLPSATPAPPPAQQ) are enriched in pro residues. An interaction with inner tegument protein region spans residues 581–611 (SPLLPQQQPPPSAAPAPSPLLPQQQPPPSAA). A compositionally biased stretch (low complexity) spans 1170 to 1182 (APISPASPSATPA). Residues 2619–2630 (SADNTPASSDRL) are compositionally biased toward polar residues. Over residues 2643 to 2654 (EGSTTAESEASG) the composition is skewed to low complexity. Pro residues predominate over residues 2738–2747 (QPAPQQPPSS). 2 stretches are compositionally biased toward polar residues: residues 2761–2772 (SPHSTPSTASGS) and 2811–2831 (SAAS…SSQD). Basic and acidic residues predominate over residues 2839-2854 (MQREKKQQGGREEAAE). 2 stretches are compositionally biased toward low complexity: residues 2872 to 2886 (APVV…ATPA) and 2901 to 2912 (APALGSGLAAPA).

This sequence belongs to the herpesviridae large tegument protein family. In terms of assembly, interacts with host CUL1 and CUL4A; these interactions inhibit the E3 ligase activity of cullins. Interacts with inner tegument protein. Interacts with capsid vertex specific component CVC2. Interacts with the major capsid protein/MCP. Interacts with host TRIM25 and YWHAZ.

It localises to the virion tegument. Its subcellular location is the host cytoplasm. The protein localises to the host nucleus. The enzyme catalyses Thiol-dependent hydrolysis of ester, thioester, amide, peptide and isopeptide bonds formed by the C-terminal Gly of ubiquitin (a 76-residue protein attached to proteins as an intracellular targeting signal).. Large tegument protein that plays multiple roles in the viral cycle. During viral entry, remains associated with the capsid while most of the tegument is detached and participates in the capsid transport toward the host nucleus. Plays a role in the routing of the capsid at the nuclear pore complex and subsequent uncoating. Within the host nucleus, acts as a deneddylase and promotes the degradation of nuclear CRLs (cullin-RING ubiquitin ligases) and thereby stabilizes nuclear CRL substrates, while cytoplasmic CRLs remain unaffected. These modifications prevent host cell cycle S-phase progression and create a favorable environment allowing efficient viral genome replication. Participates later in the secondary envelopment of capsids. Indeed, plays a linker role for the association of the outer viral tegument to the capsids together with the inner tegument protein. Counteracts host TLR-mediated NF-kappa-B activation through both MYD88 and TICAM1-dependent pathways by interfering with 'Lys-63'- and 'Lys-48'-linked ubiquitination of signaling intermediates such as TRAF6 and IKBKG. Inhibits type I interferon production by forming a tri-molecular complex with host TRIM25 and 14-3-3 thereby promoting TRIM25 autoubiquitination and sequestration of the ligase into inactive protein aggregates. In turn, host RIGI is recruited to the complex but ubiquitination is severely impaired leading to inhibition of the pathway. Also catalyzes the removal of 'Lys-48'- and 'Lys-63'-linked ubiquitin chains on host TBK1 and STING1 suppressing cGAS-STING signaling in addition to the RIGI-MAVS pathway. Inhibits selective autophagy by deubiquitinating host SQSTM1. In turn, decreased SQSTM1 ubiquitination fails to recruit LC3 to SQSTM1-positive aggregates. In the host nucleus, deubiquitinates topoisomerase II subunits TOP2A and TOP2B thereby stabilizing SUMOylated TOP2 which halts the DNA damage response to TOP2-induced double strand DNA breaks and promotes cell survival. This chain is Large tegument protein deneddylase, found in Homo sapiens (Human).